A 1333-amino-acid chain; its full sequence is snRNA-activating protein complex subunit 4 (1333 aa).

A disordered region spans residues 29–84; the sequence is HFEVSESSLSSDSEADSLPDEDLETAGAPILEEEGSSESSNDEEDPKDKALPEDPE. 2 stretches are compositionally biased toward acidic residues: residues 41-52 and 59-73; these read SEADSLPDEDLE and LEEE…DEED. A Phosphoserine modification is found at Ser68. The SNAPC5-binding stretch occupies residues 84 to 133; sequence ETCLQLNMVYQEVIREKLAEVSQLLAQNQEQQEEILFDLSGTKCPKVKDG. In terms of domain architecture, Myb-like 1 spans 250-288; that stretch reads EEALLGNRLDSHDWEKISNINFEGARSAEEIRKFWQSSE. The HTH myb-type 1 domain maps to 289 to 343; that stretch reads HPSISKQEWSTEEVERLKAIAATHGHLEWHLVAEELGTSRSAFQCLQKFQQYNKT. A DNA-binding region (H-T-H motif) is located at residues 317-341; that stretch reads WHLVAEELGTSRSAFQCLQKFQQYN. A Myb-like 2 domain is found at 344 to 395; the sequence is LKRKEWTEEEDHMLTQLVQEMRVGNHIPYRKIVYFMEGRDSMQLIYRWTKSL. 2 HTH myb-type domains span residues 396 to 451 and 452 to 503; these read DPSL…HFSL and KKGR…RKKQ. DNA-binding regions (H-T-H motif) lie at residues 424-447 and 476-499; these read WFKI…IRRL and WARI…KILA. Over residues 503-515 the composition is skewed to basic residues; it reads QHLQRKRGQRPRH. Disordered stretches follow at residues 503–558, 662–702, 811–842, and 1079–1117; these read QHLQ…LEKS, LMKE…QNKQ, NAKN…LGSC, and LPSP…PEKA. Residues 516–546 are compositionally biased toward low complexity; sequence SSQWSSSGSSSSSSEDYGSSSGSDGSSGSEN. Polar residues-rich tracts occupy residues 672-686 and 811-826; these read LPSS…NNTA and NAKN…TGEQ. Positions 1131-1247 are SNAPC2-binding; sequence AIVTWLKGCQ…NSIPTTLSPD (117 aa). Ser1252, Ser1254, Ser1301, and Ser1309 each carry phosphoserine. The tract at residues 1282 to 1333 is disordered; the sequence is PAAPDPVQSHLVSPGQRAPSPGEVSAPSPLDASDGLDDLNVLRTRRARHSRR. The span at 1324–1333 shows a compositional bias: basic residues; that stretch reads RTRRARHSRR.

In terms of assembly, part of the SNAPc composed of 5 subunits: SNAPC1, SNAPC2, SNAPC3, SNAPC4 and SNAPC5. SNAPC4 interacts with SNAPC1, SNAPC2, SNAPC5, BRF2 and TBP.

Its subcellular location is the nucleus. Functionally, part of the SNAPc complex required for the transcription of both RNA polymerase II and III small-nuclear RNA genes. Binds to the proximal sequence element (PSE), a non-TATA-box basal promoter element common to these 2 types of genes. Recruits TBP and BRF2 to the U6 snRNA TATA box. In Mus musculus (Mouse), this protein is snRNA-activating protein complex subunit 4.